Consider the following 308-residue polypeptide: Leucine-rich repeat-containing protein 59 (308 aa).

The Cytoplasmic segment spans residues 1–248 (MARANGRSQN…LARRQSRLRK (248 aa)). 5 LRR repeats span residues 10–31 (NLRDKLDGNELDLSLSDLSEVP), 40–61 (KATALDLSCNKLTSLPDDFCNL), 63–84 (YIVRLDLSKNQIAQLPSEFGRL), 86–107 (NLQHLDLLQNRIVALPVSFAQL), and 109–128 (SLKWLDLKDNPLKPALAKVA). Residues 154-223 (DHERELQRKL…NNNKKKAEEE (70 aa)) are a coiled coil. Basic and acidic residues-rich tracts occupy residues 170–187 (KQRLEAQQRVKEEQDREL), 194–203 (QQKERKRRDY), and 218–237 (KKAEEEPSENHKPVPTPKEK). The tract at residues 170-240 (KQRLEAQQRV…VPTPKEKKLA (71 aa)) is disordered. A helical transmembrane segment spans residues 249-269 (IACILLFGLMVALLGVVACRF). Residues 270 to 308 (TDLKTFEVCRSVNAVYKETLSALHSNPVLERFLQDPSSQ) lie on the Lumenal side of the membrane.

As to quaternary structure, interacts with SGO1.

The protein resides in the microsome membrane. It is found in the endoplasmic reticulum membrane. Its subcellular location is the nucleus envelope. Its function is as follows. Required for nuclear import of FGF1. The sequence is that of Leucine-rich repeat-containing protein 59 (lrrc59) from Xenopus tropicalis (Western clawed frog).